A 511-amino-acid chain; its full sequence is Prolyl 3-hydroxylase OGFOD1 (511 aa).

A disordered region spans residues 1–20; sequence MTGKRGTAAGTDGSGNKKGK. Residues 138–240 form the Fe2OG dioxygenase domain; that stretch reads KTVDISCAQY…RLSVSGWFHG (103 aa). Residues His-156 and Asp-158 each coordinate Fe cation. Residue Tyr-170 coordinates 2-oxoglutarate. His-219 serves as a coordination point for Fe cation. Residue Arg-231 coordinates 2-oxoglutarate. The disordered stretch occupies residues 372–403; that stretch reads NEESDEGEGPSEPNTVSQQGASSEDDKVPSCS.

It belongs to the TPA1 family. Monomer. It depends on Fe(2+) as a cofactor. Requires L-ascorbate as cofactor.

The protein resides in the cytoplasm. The protein localises to the nucleus. It catalyses the reaction [ribosomal protein uS12]-L-proline + 2-oxoglutarate + O2 = [ribosomal protein uS12]-(3S)-3-hydroxy-L-proline + succinate + CO2. Prolyl 3-hydroxylase that catalyzes 3-hydroxylation of 'Pro-62' of small ribosomal subunit uS12 (rps23), thereby regulating protein translation termination efficiency. Involved in stress granule formation. This is Prolyl 3-hydroxylase OGFOD1 (ogfod1) from Xenopus laevis (African clawed frog).